The chain runs to 206 residues: Threonine efflux protein (206 aa).

Residues 1 to 21 (MLMLFFTVAMVHIVALMSPGP) traverse the membrane as a helical segment. At 22–43 (DFFFVSQTAVSRSRKEAMMGVL) the chain is on the periplasmic side. A helical membrane pass occupies residues 44-64 (GITCGVMVWAGVALLGLHLII). Residues 65–66 (EK) are Cytoplasmic-facing. Residues 67 to 87 (MAWLHTIIMVGGGLYLCWMGY) form a helical membrane-spanning segment. The Periplasmic portion of the chain corresponds to 88–149 (QMLRGALKKQ…VGDNVGAAAR (62 aa)). Residues 150-173 (WGIFALITLETLAWFTVVASLFAL) traverse the membrane as a helical segment. The Cytoplasmic portion of the chain corresponds to 174–206 (PKMRRGYQRLAKWIDGFAGALFAGFGIHLIISR).

Belongs to the Rht family.

Its subcellular location is the cell inner membrane. In terms of biological role, conducts the efflux of threonine. In Salmonella typhi, this protein is Threonine efflux protein (rhtC).